A 1744-amino-acid chain; its full sequence is Retrotransposon-like protein 1 (1744 aa).

3 disordered regions span residues 1–416, 823–859, and 1287–1439; these read MIEP…SPEE, READ…DQSG, and SSET…EVPS. Residues 19 to 30 show a composition bias toward low complexity; the sequence is SSKQMESSEGSS. The segment covering 31-40 has biased composition (polar residues); the sequence is NTVEETPGSS. Low complexity predominate over residues 41 to 80; the sequence is GAQAGAQAGAQAEAQAETQVEAQAEAQAEAQVEAQVEAQA. Residues 269–318 are compositionally biased toward polar residues; it reads DGSNQESSDGSNHELSNGSNHESSFGSNPESSDVSNLESSGGSNQESSDG. Residues 332–361 are compositionally biased toward low complexity; sequence SDNSNQELSDNSNQESSDSSNQSSDISNQE. 3 stretches are compositionally biased toward acidic residues: residues 385–407, 837–846, and 1291–1437; these read SDQD…GEEE, GSDDLSESEP, and EDKE…DEEV. Helical transmembrane passes span 1473-1493 and 1520-1540; these read FFRG…LVML and LILD…AQLL.

As to expression, expressed in placenta and in various tissues in late-fetal stage.

It is found in the membrane. Functionally, plays an essential role in capillaries endothelial cells for the maintenance of feto-maternal interface and for development of the placenta. The chain is Retrotransposon-like protein 1 (Rtl1) from Mus musculus (Mouse).